The sequence spans 416 residues: Cotranscriptional regulator ARB2A (416 aa).

Positions 1–18 (MSISLSSLILLPIWINMA) are cleaved as a signal peptide. The interval 208-247 (KPKIHVQSSSDSSDEPAEKRERKDKVSKETKKRRDFYEKY) is disordered. A compositionally biased stretch (basic and acidic residues) spans 223–236 (PAEKRERKDKVSKE). S293 acts as the Nucleophile in catalysis. Positions 413-416 (HEEL) match the Prevents secretion from ER motif.

This sequence belongs to the ARB2A family. As to quaternary structure, interacts with AGO2. Found in a complex, composed of AGO2, CHD7 and ARB2A.

The protein resides in the nucleus. It is found in the cytoplasm. The protein localises to the endoplasmic reticulum. Functionally, plays a role in the regulation of alternative splicing, by interacting with AGO2 and CHD7. Seems to be required for stabilizing protein-protein interactions at the chromatin-spliceosome interface. May have hydrolase activity. This is Cotranscriptional regulator ARB2A from Homo sapiens (Human).